The chain runs to 257 residues: UPF0246 protein ACICU_02469 (257 aa).

It belongs to the UPF0246 family.

The chain is UPF0246 protein ACICU_02469 from Acinetobacter baumannii (strain ACICU).